The primary structure comprises 292 residues: MNGIINLKKEAGMTSHDAVFKLRKILGTKKIGHGGTLDPDVVGVLPIAVGKATRMVEFMQDEGKIYEGEITLGYSTKTEDASGEVVAETPVLSLLDEKLVDEAIASLTGPITQIPPMYSAVKVNGRKLYEYARAGQEVERPERQVTIYQFERTSPISYDGQLARFTFRVKCSKGTYIRTLSVDLGEKLGYAAHMSHLTRTSAAGLQLEDALALEEIAEKVEAGQLDFLHPLEIGTGDLVKVFLSPEEATEVRFGRFIELDQTDKELAAFEDDKLLAILEKRGNLYKPRKVFS.

Asp-38 acts as the Nucleophile in catalysis.

It belongs to the pseudouridine synthase TruB family. Type 1 subfamily.

It catalyses the reaction uridine(55) in tRNA = pseudouridine(55) in tRNA. Its function is as follows. Responsible for synthesis of pseudouridine from uracil-55 in the psi GC loop of transfer RNAs. This Streptococcus pneumoniae serotype 4 (strain ATCC BAA-334 / TIGR4) protein is tRNA pseudouridine synthase B.